Consider the following 272-residue polypeptide: MGEMEIEEIEAVLEKIWDLHDKLSDEIHLISKSHFLKSVKPSNRSEKRKNPHGNSGEDKRPGYVFIKGFAVDDNDSTIQEAKSLNAIRTALENLEDQLEFFHTIHTQQRTEKDVAIARLEQSRILLAMRLAEHHGKNYGVLEEALAFVGSIKSNSHYVSPDHLYDSSRNPDGANSIPDGIESNFVINAFASTFGFAKRALGFNHVKGVLGNAAIFAISVVAMLHLHQVATSEHHLQKKEDRFYRSQQRKTYGRDKSSADRSLDHLDVMMARG.

Residues Met1 to Lys206 lie on the Cytoplasmic side of the membrane. Positions Lys40–Pro61 are disordered. The stretch at Ile78–His102 forms a coiled coil. A helical transmembrane segment spans residues Gly207–Leu225. At His226–Gly272 the chain is on the chloroplast intermembrane side.

As to quaternary structure, interacts (via C-terminus) with CDP1/PARC6 (via C-terminus). Interacts with ARC5/DRP5B. Expressed in young developing leaves, root tips, shoot apices, and flower buds (sepals, petals, stamens, and pistils), but not in developed tissues.

The protein resides in the plastid. Its subcellular location is the chloroplast outer membrane. In terms of biological role, component of the plastid division machinery. Required to mediate the dissociation of ARC5/DRP5B from plastid outer envelope membranes (OEMs) at the midplastid constriction site in the cytoplasm, thus triggering ARC5/DRP5B ring turnover at the chloroplast division site. Binding to phosphatidylinositol 4-phosphate (PI4P) modulates negatively chloroplast division. The chain is Plastid division protein PDV1 from Arabidopsis thaliana (Mouse-ear cress).